The chain runs to 114 residues: Putative pterin-4-alpha-carbinolamine dehydratase (114 aa).

The protein belongs to the pterin-4-alpha-carbinolamine dehydratase family.

It carries out the reaction (4aS,6R)-4a-hydroxy-L-erythro-5,6,7,8-tetrahydrobiopterin = (6R)-L-erythro-6,7-dihydrobiopterin + H2O. The chain is Putative pterin-4-alpha-carbinolamine dehydratase from Methylococcus capsulatus (strain ATCC 33009 / NCIMB 11132 / Bath).